The chain runs to 203 residues: RNA pyrophosphohydrolase (203 aa).

The region spanning 6-149 is the Nudix hydrolase domain; it reads GFRPNVGIIL…KRNVYQMALT (144 aa). Residues 38–59 carry the Nudix box motif; sequence GGIKHGESPEQAMFRELHEEVG. Positions 170–203 are disordered; that stretch reads RAHRRDEGSEHNDHLDPTGPHDAGASVSEPKQAE. Positions 173-185 are enriched in basic and acidic residues; it reads RRDEGSEHNDHLD.

Belongs to the Nudix hydrolase family. RppH subfamily. Requires a divalent metal cation as cofactor.

Accelerates the degradation of transcripts by removing pyrophosphate from the 5'-end of triphosphorylated RNA, leading to a more labile monophosphorylated state that can stimulate subsequent ribonuclease cleavage. This chain is RNA pyrophosphohydrolase, found in Leptothrix cholodnii (strain ATCC 51168 / LMG 8142 / SP-6) (Leptothrix discophora (strain SP-6)).